We begin with the raw amino-acid sequence, 100 residues long: Aspartyl/glutamyl-tRNA(Asn/Gln) amidotransferase subunit C (100 aa).

Belongs to the GatC family. Heterotrimer of A, B and C subunits.

It catalyses the reaction L-glutamyl-tRNA(Gln) + L-glutamine + ATP + H2O = L-glutaminyl-tRNA(Gln) + L-glutamate + ADP + phosphate + H(+). The enzyme catalyses L-aspartyl-tRNA(Asn) + L-glutamine + ATP + H2O = L-asparaginyl-tRNA(Asn) + L-glutamate + ADP + phosphate + 2 H(+). Functionally, allows the formation of correctly charged Asn-tRNA(Asn) or Gln-tRNA(Gln) through the transamidation of misacylated Asp-tRNA(Asn) or Glu-tRNA(Gln) in organisms which lack either or both of asparaginyl-tRNA or glutaminyl-tRNA synthetases. The reaction takes place in the presence of glutamine and ATP through an activated phospho-Asp-tRNA(Asn) or phospho-Glu-tRNA(Gln). This Petrotoga mobilis (strain DSM 10674 / SJ95) protein is Aspartyl/glutamyl-tRNA(Asn/Gln) amidotransferase subunit C.